We begin with the raw amino-acid sequence, 142 residues long: Hemoglobin subunit beta-C (142 aa).

The Globin domain occupies 2 to 142 (PNKALITGFW…VASALAHRYH (141 aa)). 2 residues coordinate heme b: His59 and His88.

Belongs to the globin family. In terms of assembly, heterotetramer of two alpha chains and two beta chains. In terms of tissue distribution, red blood cells.

Its function is as follows. Involved in oxygen transport from the lung to the various peripheral tissues. This chain is Hemoglobin subunit beta-C (HBBC), found in Ovis aries (Sheep).